A 415-amino-acid polypeptide reads, in one-letter code: Putative transcription factor BOFH (415 aa).

The tract at residues 159-221 is disordered; that stretch reads SQEPVQHQDQ…NEGEDDDGMD (63 aa). A compositionally biased stretch (gly residues) spans 174 to 183; that stretch reads INGGGRGGYW. The span at 193–202 shows a compositional bias: basic residues; the sequence is QQQRRRKKRL. A compositionally biased stretch (acidic residues) spans 206-220; the sequence is ETDDDGNEGEDDDGM. 3 DNA-binding regions span residues 234–238, 303–310, and 374–377; these read REHPF, NKPKMRHY, and YVPT.

Belongs to the FLO/LFY family. In terms of tissue distribution, acts in the floral primordia.

Its subcellular location is the nucleus. Functionally, controls floral meristem identity. Is required very early in flower development and may act here as a transcription factor. The protein is Putative transcription factor BOFH of Brassica oleracea var. botrytis (Cauliflower).